Reading from the N-terminus, the 600-residue chain is Aspartate--tRNA(Asp/Asn) ligase (600 aa).

Glu-181 is a binding site for L-aspartate. Residues 205–208 (QQFK) are aspartate. Residue Arg-227 coordinates L-aspartate. Residues 227-229 (RDE) and Gln-236 each bind ATP. His-455 is an L-aspartate binding site. Glu-489 lines the ATP pocket. Arg-496 is a binding site for L-aspartate. 541-544 (GIDR) lines the ATP pocket.

This sequence belongs to the class-II aminoacyl-tRNA synthetase family. Type 1 subfamily. Homodimer.

The protein localises to the cytoplasm. The catalysed reaction is tRNA(Asx) + L-aspartate + ATP = L-aspartyl-tRNA(Asx) + AMP + diphosphate. In terms of biological role, aspartyl-tRNA synthetase with relaxed tRNA specificity since it is able to aspartylate not only its cognate tRNA(Asp) but also tRNA(Asn). Reaction proceeds in two steps: L-aspartate is first activated by ATP to form Asp-AMP and then transferred to the acceptor end of tRNA(Asp/Asn). This Rubrobacter xylanophilus (strain DSM 9941 / JCM 11954 / NBRC 16129 / PRD-1) protein is Aspartate--tRNA(Asp/Asn) ligase.